Consider the following 108-residue polypeptide: SPbeta prophage-derived uncharacterized HTH-type transcriptional regulator YonR (108 aa).

Positions 6 to 60 constitute an HTH cro/C1-type domain; it reads LKKCRTSKGYSQQRMADFLGITRQGYGKYEIGKAEPDLKTLTKLSNILGVSTDFL. Residues 17–36 constitute a DNA-binding region (H-T-H motif); sequence QQRMADFLGITRQGYGKYEI.

The protein is SPbeta prophage-derived uncharacterized HTH-type transcriptional regulator YonR (yonR) of Bacillus subtilis (strain 168).